Here is a 777-residue protein sequence, read N- to C-terminus: Gliding motility regulatory protein (777 aa).

The HPt domain occupies 1–108 (MDTEALKKSL…SDLNEDLSGA (108 aa)). Position 49 is a phosphohistidine; by autocatalysis (His49). Disordered stretches follow at residues 129–149 (TPPAIAGARPVAPPPAPPPAP) and 164–212 (PAPV…KSAV). Pro residues-rich tracts occupy residues 139–149 (VAPPPAPPPAP) and 164–177 (PAPVQAPVAPPPTQ). Residues 178–197 (APVAEPGAHAAAAAPHPAAA) show a composition bias toward low complexity. The Histidine kinase domain maps to 270-509 (DISNEVREQL…TITLRLPQSL (240 aa)). The CheW-like domain occupies 511-645 (LMKVLLVRLG…VPDIMAEVRR (135 aa)). A Response regulatory domain is found at 660–776 (RVLLVDDSPI…EVLAQAIDRL (117 aa)). At Asp709 the chain carries 4-aspartylphosphate.

It carries out the reaction ATP + protein L-histidine = ADP + protein N-phospho-L-histidine.. FrzE is involved in a sensory transduction pathway that controls the frequency at which cells reverse their gliding direction. FrzE seems to be capable of autophosphorylating itself on a histidine residue and then to transfer that group to an aspartate residue in the C-terminal part of the protein. The polypeptide is Gliding motility regulatory protein (frzE) (Myxococcus xanthus).